Reading from the N-terminus, the 252-residue chain is Orotidine 5'-phosphate decarboxylase (252 aa).

Substrate-binding positions include aspartate 26, lysine 48, 75-84 (DLKFHDIPNT), threonine 135, arginine 196, glutamine 205, glycine 225, and arginine 226. Lysine 77 functions as the Proton donor in the catalytic mechanism.

Belongs to the OMP decarboxylase family. Type 1 subfamily. As to quaternary structure, homodimer.

It catalyses the reaction orotidine 5'-phosphate + H(+) = UMP + CO2. It participates in pyrimidine metabolism; UMP biosynthesis via de novo pathway; UMP from orotate: step 2/2. Functionally, catalyzes the decarboxylation of orotidine 5'-monophosphate (OMP) to uridine 5'-monophosphate (UMP). This is Orotidine 5'-phosphate decarboxylase from Sodalis glossinidius (strain morsitans).